An 842-amino-acid polypeptide reads, in one-letter code: CRM-domain containing factor CFM3, chloroplastic/mitochondrial (842 aa).

A chloroplast and mitochondrion-targeting transit peptide spans 1 to 82 (MAMASSPACH…RSSGRSTMSL (82 aa)). 3 disordered regions span residues 49-80 (AALDLRPEPSPSSDSDDEDAVGASRSSGRSTM), 141-160 (RFPWERPMPPPEAAPRSARS), and 254-290 (VDYDEPEPTKKSKKNSQSLAMDFPIKGSSNPSLLPTE). The 97-residue stretch at 167-263 (LTLPAAELRR…VDYDEPEPTK (97 aa)) folds into the CRM 1 domain. Residues 280-290 (GSSNPSLLPTE) are compositionally biased toward polar residues. 2 CRM domains span residues 371 to 468 (PSLS…ELAE) and 582 to 682 (ETIT…SSLR). The stretch at 703–732 (QALSRHFAKLNRKVERLKAELVQMEDVKEQ) forms a coiled coil. The disordered stretch occupies residues 768–842 (VAGATADDDG…DRRNHDVNEY (75 aa)). The span at 786-812 (DEADYPDSDDEAGDCSEDEGEDDEDEA) shows a compositional bias: acidic residues. Residues 831–842 (DTDRRNHDVNEY) show a composition bias toward basic and acidic residues.

In terms of assembly, interacts with RNA. Part of large ribonucleo-protein particles that contain CAF1 and/or CAF2, and RNC1.

It is found in the plastid. The protein localises to the chloroplast stroma. Its subcellular location is the mitochondrion. Its function is as follows. Binds specific group II introns in chloroplasts and facilitates their splicing. Acts on subgroup IIB introns. The substrates of the subgroup IIB also require the CRM domain proteins CAF1 or CAF2, with a simultaneous binding of CFM3 and CAF1 or CAF2. May influence the biogenesis of the mitochondrial small ribosomal subunit. The polypeptide is CRM-domain containing factor CFM3, chloroplastic/mitochondrial (Zea mays (Maize)).